A 364-amino-acid chain; its full sequence is MTNKRKSAKPLEPAKRAPKPRTKKSRDLSASESNCDFVKVTRAGLHSRNKHQGRYDFAKLTQALPSLAPFVIKNPKGEASISFSDSTAVKMLNKALLSAYYQVANWDIPAGYLCPPIPGRADYIHRLAELLEGEVKGKFPHEKVQALDIGVGANAIYPIIAICDYRWRYTGSDVDPKSIESAQRIADSNPVLQGQLELKLQDQSQHIFQGIIGPTDYFHVTTCNPPFHASAQEAAFGTQRKLDNLAANRLKKGVTAKAGSQKISKNKPILNFGGQNSELWCQGGESSFLKRMANESERFAHQVLWFSTLVSKKDNVRPLRKQLEKLGVRSIRVVEMSQGQKVSRFVAWSFMDKQQRGEWIKLRG.

The interval 1-30 is disordered; that stretch reads MTNKRKSAKPLEPAKRAPKPRTKKSRDLSA.

This sequence belongs to the methyltransferase superfamily. METTL16/RlmF family.

Its subcellular location is the cytoplasm. The catalysed reaction is adenosine(1618) in 23S rRNA + S-adenosyl-L-methionine = N(6)-methyladenosine(1618) in 23S rRNA + S-adenosyl-L-homocysteine + H(+). Functionally, specifically methylates the adenine in position 1618 of 23S rRNA. The chain is Ribosomal RNA large subunit methyltransferase F from Vibrio vulnificus (strain CMCP6).